The primary structure comprises 449 residues: Putative glycosyltransferase 7 (449 aa).

At 1–32 (MVSPETSSSHYQSSPMAKYAGTRTRPVVCISD) the chain is on the cytoplasmic side. A helical; Signal-anchor for type II membrane protein membrane pass occupies residues 33-53 (VVLFLGGAFMSLILVWSFFSF). The Lumenal portion of the chain corresponds to 54-449 (SSISPNLTVK…VPFDYPDEPW (396 aa)). N-linked (GlcNAc...) asparagine glycosylation is found at Asn59, Asn123, and Asn332.

Belongs to the glycosyltransferase 34 family.

It is found in the golgi apparatus membrane. Its function is as follows. Probable glycosyltransferase that may be involved in the biosynthesis of xyloglucan. The chain is Putative glycosyltransferase 7 (GT7) from Arabidopsis thaliana (Mouse-ear cress).